The chain runs to 37 residues: Alpha-conotoxin TxID (37 aa).

Residues 1-21 (FDGRNAAGNDKMSALMALTTR) constitute a propeptide that is removed on maturation. 2 disulfide bridges follow: Cys23–Cys29 and Cys24–Cys36. At Cys36 the chain carries Cysteine amide.

The protein belongs to the conotoxin A superfamily. In terms of processing, unmodified Met-32 is essential for toxin binding to rat alpha-3-beta-4/CHRNA3-CHRNB4 nAChR. An oxidation of this methionine provokes a 13.3-fold decrease in inhibitory potency (IC(50)=245 nM instead of 18 nM). Owing to its potent activity, derivatives of this toxin have a potential in the development of a novel drug. Unfortunately, the oxidation of the methionine is readily to happen during toxin synthesis and oxidation steps as well as under oxidative environment in vivo, which should still be considered to find a solution to this major drawback. In terms of tissue distribution, expressed by the venom duct.

The protein localises to the secreted. In terms of biological role, alpha-conotoxins act on postsynaptic membranes, they bind to the nicotinic acetylcholine receptors (nAChR) and thus inhibit them. This toxin inhibits alpha-3-beta-4/CHRNA3-CHRNB4 (IC(50)=3.6-18.38 nM), alpha-6/alpha-3-beta-4 (CHRNA6/CHRNA3-CHRNB4) (IC(50)=33.9-94.1 nM), and alpha-2-beta-4/CHRNA2-CHRNB4 (IC(50)=4550 nM) nAChRs. The toxin competes with agonists in the orthosteric binding site of alpha-3-beta-4/CHRNA3-CHRNB4 and alpha-6-beta-4/CHRNA6-CHRNB4. The protein is Alpha-conotoxin TxID of Conus textile (Cloth-of-gold cone).